The sequence spans 130 residues: Small ribosomal subunit protein uS9 (130 aa).

This sequence belongs to the universal ribosomal protein uS9 family.

This chain is Small ribosomal subunit protein uS9, found in Aeromonas salmonicida (strain A449).